Consider the following 1134-residue polypeptide: MTSSGKIRIYELSRDLHLENKDVLDAANKLSISAKSHSSSISDEDATKIKKLLLAQKSSNSSSPPAKQKPNKEILTLKKAITSPPTKSEANAKTNASLDKTSSLKNKPASPKKEIPTSPKPPSAAKQRVDAIKKPTPSISKNNSLKVQPTIKKPSLVSPKQPNIPSPPIAPNKGIKPTIKRQDSNNENLETNKTKAKPNIVSKPQARQIKQSSDLINRSPKTSPKQPIQEIQTNKPKAPQRPIAPPPRPKVQSQFNQKPGNNNLRGGPNQRKGIPQGAPSGQPGSTKHPRNLPTGSYKGNRVELVGAPIRRNTKPDNGGRGARDGNFRQGGPNQGPPISRQGGARRQEGGGGRGQQMRPRTGMPPGMRKPVAPGELMQLQKPTSSATPPIKRGDLNKGPKKDGISTAKPPANRPTPSAAPKRPPARTGAPGSSRKRKPDWDDAAKLEALRNKSPQKQRQKVHIIGENDDALTAETSGFAGGGQAVVLSASLARPGKPKASKKSGSKPTGALRKRKKESTRQRQRRRAMELRAAREAKQIRPEMIVVPEDNITVQELADKLSVESSEIIKSLFFKGITATVTQSLDLSTIETVAEEFGVPVLQDDIEEAAKKTVEMIEETDIKHLTRRPPVVTVMGHVDHGKTSLLDAIRKARVAAGEAGGITQHIGAYQVEVEHEKKLRTLTFLDTPGHEAFTAMRARGTKVTDVAVLVVAADDGVRPQTLEAISHARAAKVPIVVAINKIDKEGASPDRVKQELSEQELVAEEWGGDVVMMPVSAIKGENIDKLLEMILLVTEVEDLQANPARLAKGTVIEAHLDKAKGPVATLLVQNGTLKAGDVVAAGPVLGKVRAMVDENGKRLKEAGPSCPVEALGFNEVPTAGDEFEVYPDEKSARSVVGERASDARATRLAQQMASRRVSLSAMSGQVNDGDLKELNLILKADVQGSVEAILGSLEQLPKDEVQVRVLLSAPGEITETDVDLAAASGAVIIGFNTSMASGAKKAADANSVDVRDYEVIYKLLEDIQLAMEGLLEPDLVEEKIGEAEVRAIFTIGKSAVAGCYITNGKLQRNCKVRVKRADQIVFNGDLDSLRRNKDVVKDVSSGFECGIGCDRFANWKEGDTIEGYKLVTQRRKLNT.

2 disordered regions span residues 55–465 and 491–524; these read AQKS…HIIG and LARP…QRQR. Polar residues-rich tracts occupy residues 56–65, 83–105, 137–147, 208–234, and 251–264; these read QKSSNSSSPP, SPPT…SSLK, PSISKNNSLKV, QIKQ…IQTN, and VQSQ…NNNL. Composition is skewed to basic and acidic residues over residues 391-403 and 438-450; these read KRGD…KKDG and PDWD…EALR. 2 stretches are compositionally biased toward basic residues: residues 495 to 504 and 511 to 524; these read GKPKASKKSG and LRKR…QRQR. The tr-type G domain maps to 626–798; sequence RRPPVVTVMG…ILLVTEVEDL (173 aa). Positions 635–642 are G1; sequence GHVDHGKT. 635-642 lines the GTP pocket; that stretch reads GHVDHGKT. Residues 660–664 are G2; sequence GITQH. Positions 685-688 are G3; sequence DTPG. GTP-binding positions include 685-689 and 739-742; these read DTPGH and NKID. The interval 739-742 is G4; it reads NKID. The G5 stretch occupies residues 775 to 777; sequence SAI.

Belongs to the TRAFAC class translation factor GTPase superfamily. Classic translation factor GTPase family. IF-2 subfamily.

The protein resides in the cytoplasm. Its function is as follows. One of the essential components for the initiation of protein synthesis. Protects formylmethionyl-tRNA from spontaneous hydrolysis and promotes its binding to the 30S ribosomal subunits. Also involved in the hydrolysis of GTP during the formation of the 70S ribosomal complex. In Prochlorococcus marinus (strain SARG / CCMP1375 / SS120), this protein is Translation initiation factor IF-2.